Here is an 89-residue protein sequence, read N- to C-terminus: Small ribosomal subunit protein uS14A (89 aa).

This sequence belongs to the universal ribosomal protein uS14 family. In terms of assembly, part of the 30S ribosomal subunit. Contacts proteins S3 and S10.

Functionally, binds 16S rRNA, required for the assembly of 30S particles and may also be responsible for determining the conformation of the 16S rRNA at the A site. This is Small ribosomal subunit protein uS14A from Levilactobacillus brevis (strain ATCC 367 / BCRC 12310 / CIP 105137 / JCM 1170 / LMG 11437 / NCIMB 947 / NCTC 947) (Lactobacillus brevis).